Consider the following 321-residue polypeptide: Lambda-crystallin homolog (321 aa).

S6 is subject to Phosphoserine. NAD(+)-binding positions include L19–I20, D39, E100, and K105.

This sequence belongs to the 3-hydroxyacyl-CoA dehydrogenase family. As to quaternary structure, homodimer.

The protein resides in the cytoplasm. It carries out the reaction L-gulonate + NAD(+) = 3-dehydro-L-gulonate + NADH + H(+). Inhibited by malonate. Its function is as follows. Has high L-gulonate 3-dehydrogenase activity. It also exhibits low dehydrogenase activity toward L-3-hydroxybutyrate (HBA) and L-threonate. The protein is Lambda-crystallin homolog (CRYL1) of Bos taurus (Bovine).